Consider the following 779-residue polypeptide: Acyl-CoA dehydrogenase family member 11 (779 aa).

The residue at position 175 (lysine 175) is an N6-acetyllysine. Serine 210 is modified (phosphoserine). A Phosphotyrosine modification is found at tyrosine 323. Residues lysine 368 and lysine 390 each carry the N6-succinyllysine modification. FAD contacts are provided by residues 503-513 (FCMTEPNVSSS), 511-513 (SSS), 537-539 (WSS), and serine 539. Substrate is bound at residue serine 513. Residue 628 to 631 (GPGR) participates in substrate binding. FAD contacts are provided by residues arginine 656, glutamine 726, and 726–730 (QVHGG). Position 754 (glycine 754) interacts with substrate. FAD-binding positions include 755-757 (PDE) and glutamate 757. Lysine 765 bears the N6-acetyllysine mark.

Belongs to the acyl-CoA dehydrogenase family. Homodimer. FAD serves as cofactor.

The protein resides in the peroxisome. It localises to the mitochondrion membrane. It catalyses the reaction a 2,3-saturated acyl-CoA + oxidized [electron-transfer flavoprotein] + H(+) = a (2E)-enoyl-CoA + reduced [electron-transfer flavoprotein]. It carries out the reaction docosanoyl-CoA + oxidized [electron-transfer flavoprotein] + H(+) = (2E)-docosenoyl-CoA + reduced [electron-transfer flavoprotein]. The enzyme catalyses tetracosanoyl-CoA + oxidized [electron-transfer flavoprotein] + H(+) = (2E)-tetracosenoyl-CoA + reduced [electron-transfer flavoprotein]. The catalysed reaction is eicosanoyl-CoA + oxidized [electron-transfer flavoprotein] + H(+) = (2E)-eicosenoyl-CoA + reduced [electron-transfer flavoprotein]. It catalyses the reaction hexacosanoyl-CoA + oxidized [electron-transfer flavoprotein] + H(+) = (2E)-hexacosenoyl-CoA + reduced [electron-transfer flavoprotein]. It carries out the reaction tricosanoyl-CoA + oxidized [electron-transfer flavoprotein] + H(+) = (2E)-tricosenoyl-CoA + reduced [electron-transfer flavoprotein]. It functions in the pathway lipid metabolism; fatty acid beta-oxidation. Its function is as follows. Acyl-CoA dehydrogenase, that exhibits maximal activity towards saturated C22-CoA. Probably participates in beta-oxydation and energy production but could also play a role in the metabolism of specific fatty acids to control fatty acids composition of cellular lipids in brain. This Rattus norvegicus (Rat) protein is Acyl-CoA dehydrogenase family member 11 (Acad11).